We begin with the raw amino-acid sequence, 274 residues long: NH(3)-dependent NAD(+) synthetase (274 aa).

Position 46-53 (46-53 (GISGGQDS)) interacts with ATP. Position 52 (aspartate 52) interacts with Mg(2+). Arginine 140 lines the deamido-NAD(+) pocket. Threonine 160 provides a ligand contact to ATP. Position 165 (glutamate 165) interacts with Mg(2+). Lysine 173 and aspartate 180 together coordinate deamido-NAD(+). ATP-binding residues include lysine 189 and threonine 211. Position 260–261 (260–261 (HK)) interacts with deamido-NAD(+).

The protein belongs to the NAD synthetase family. In terms of assembly, homodimer.

The enzyme catalyses deamido-NAD(+) + NH4(+) + ATP = AMP + diphosphate + NAD(+) + H(+). The protein operates within cofactor biosynthesis; NAD(+) biosynthesis; NAD(+) from deamido-NAD(+) (ammonia route): step 1/1. Catalyzes the ATP-dependent amidation of deamido-NAD to form NAD. Uses ammonia as a nitrogen source. This chain is NH(3)-dependent NAD(+) synthetase, found in Streptococcus pyogenes serotype M3 (strain ATCC BAA-595 / MGAS315).